We begin with the raw amino-acid sequence, 1266 residues long: Neuronal-glial cell adhesion molecule (1266 aa).

The N-terminal stretch at 1–20 is a signal peptide; the sequence is MALPMVGLLLLLLLGGPGAA. The Extracellular portion of the chain corresponds to 21–1130; the sequence is ITIPPEYGAH…PQPGGGVCTK (1110 aa). Ig-like C2-type domains follow at residues 36–128, 135–221, 236–322, 327–413, 418–506, and 510–597; these read PELT…NVIA, PKEK…KEPL, PRLL…HSVT, PYWV…AFLH, PLRM…ALLE, and PTRI…AQLR. 4 cysteine pairs are disulfide-bonded: C58-C110, C154-C205, C260-C306, and C348-C397. N97 carries N-linked (GlcNAc...) asparagine glycosylation. N288, N390, N434, N472, and N498 each carry an N-linked (GlcNAc...) asparagine glycan. Cysteines 441 and 490 form a disulfide. C532 and C581 are oxidised to a cystine. Fibronectin type-III domains follow at residues 603–698, 700–804, 809–930, 934–1021, and 1022–1118; these read PSRD…TPPA, PERN…SGED, YPEN…TPEG, PPEE…TKPE, and PPSP…TNGT. Residues 685-710 are disordered; that stretch reads EHHAPSAPIETPPAAPERNPGGVHGE. N-linked (GlcNAc...) asparagine glycosylation is found at N712 and N819. The segment at 857-882 is disordered; sequence SRRQAPPDPPQIPQSPAEDPPPFPPV. Over residues 862–881 the composition is skewed to pro residues; sequence PPDPPQIPQSPAEDPPPFPP. The short motif at 914 to 916 is the Cell attachment site element; the sequence is RGD. Residues 1004 to 1025 are disordered; that stretch reads STPRERPALQTVGSTKPEPPSP. Residues N1061, N1075, N1100, and N1116 are each glycosylated (N-linked (GlcNAc...) asparagine). The helical transmembrane segment at 1131 to 1153 threads the bilayer; the sequence is GWFIGFVSSVVLLLLILLILCFI. The Cytoplasmic portion of the chain corresponds to 1154 to 1266; the sequence is KRSKGGKYSV…ASPCAGPPLD (113 aa). A compositionally biased stretch (basic and acidic residues) spans 1163–1195; it reads VKDKEDTQVDSEARPMKDETFGEYRSLESEAEK. Positions 1163-1266 are disordered; sequence VKDKEDTQVD…ASPCAGPPLD (104 aa). The segment covering 1199–1211 has biased composition (gly residues); sequence SGSGAGSGVGSPG.

This sequence belongs to the immunoglobulin superfamily. L1/neurofascin/NgCAM family. Binds to itself and to axonin 1. As to expression, brain.

It is found in the cell membrane. Its function is as follows. Mediates the adhesion of neurons to neurons and neurons to glia. It is involved in neuronal migration, neurite fasciculation and outgrowth. In Gallus gallus (Chicken), this protein is Neuronal-glial cell adhesion molecule.